We begin with the raw amino-acid sequence, 503 residues long: Probable cytosol aminopeptidase (503 aa).

Residues Lys-270 and Asp-275 each contribute to the Mn(2+) site. The active site involves Lys-282. Asp-293, Asp-352, and Glu-354 together coordinate Mn(2+). Arg-356 is an active-site residue.

This sequence belongs to the peptidase M17 family. The cofactor is Mn(2+).

Its subcellular location is the cytoplasm. The catalysed reaction is Release of an N-terminal amino acid, Xaa-|-Yaa-, in which Xaa is preferably Leu, but may be other amino acids including Pro although not Arg or Lys, and Yaa may be Pro. Amino acid amides and methyl esters are also readily hydrolyzed, but rates on arylamides are exceedingly low.. The enzyme catalyses Release of an N-terminal amino acid, preferentially leucine, but not glutamic or aspartic acids.. Presumably involved in the processing and regular turnover of intracellular proteins. Catalyzes the removal of unsubstituted N-terminal amino acids from various peptides. The polypeptide is Probable cytosol aminopeptidase (Erwinia tasmaniensis (strain DSM 17950 / CFBP 7177 / CIP 109463 / NCPPB 4357 / Et1/99)).